Reading from the N-terminus, the 321-residue chain is MTHFVLVGDVGGTNTRLALCDAMTGELSQIETYSGLDFPSLEGAIRDYLDSRQVTVQDACIAIACPITGDWVAMTNHTWAFSIAEMKASLGLRHFEVINDFTAVSMAVPVMGRESLLQFGGGEPVPGKPVAVYGAGTGLGVAHLVHVANQWVSLPGEGGHVDFAANSDEEDNILTILRQSLGHVSAERLLSGQGLVNIYRAIVLSDDRTPEALEPKDITERAVNNTDVDCRRALSLFCVIMGRFGGNLALNLGTFGGVYIAGGIVPRFLEFFKASGFRAAFEDKGRFKGYMQDIPVYLITHEQPGLMGAGAYLRQVLGSAL.

Residue 8–13 (GDVGGT) participates in ATP binding.

Belongs to the bacterial glucokinase family.

The protein localises to the cytoplasm. The enzyme catalyses D-glucose + ATP = D-glucose 6-phosphate + ADP + H(+). This Pectobacterium atrosepticum (strain SCRI 1043 / ATCC BAA-672) (Erwinia carotovora subsp. atroseptica) protein is Glucokinase.